Reading from the N-terminus, the 401-residue chain is MDIKKILAEVKRGCAELIDEERIEKLIKNYYEKGENFFIKAGFDPTAPDLHLGHSVVLTKMAFLQKHGAIVQFLIGDFTGQIGDPSGKSATRKKLDKEQVLINAKTYETQVFKVLDKEKTQIKFNSTWLNELGAAGIVELTSTFSVARMLERDDFTKRFKEQSPISICEFLYPLLQGYDSVALKSDIEMGGTDQKFNLLMGRQLQRVYNIGKEQAVIMMPLLEGLDGVNKMSKSLNNYIGVTEKANDMYAKILSISDELMFRYYELLSQKSLEEIAQIKKDIEQSNLHPKKAKENLALEITERFHSKEEANNAKSEFDRIHSQNALPSDMAEFEIQGKIWLAKALVECGLESSTSAARRSISANAVSVNSQKVSDEQMYLKQGEYILQIGKRKFAKLKVKE.

A 'HIGH' region motif is present at residues 45 to 54 (PTAPDLHLGH). The 'KMSKS' region motif lies at 230–234 (KMSKS). An ATP-binding site is contributed by K233. An S4 RNA-binding domain is found at 339–399 (IWLAKALVEC…GKRKFAKLKV (61 aa)).

Belongs to the class-I aminoacyl-tRNA synthetase family. TyrS type 2 subfamily. In terms of assembly, homodimer.

The protein localises to the cytoplasm. It catalyses the reaction tRNA(Tyr) + L-tyrosine + ATP = L-tyrosyl-tRNA(Tyr) + AMP + diphosphate + H(+). Functionally, catalyzes the attachment of tyrosine to tRNA(Tyr) in a two-step reaction: tyrosine is first activated by ATP to form Tyr-AMP and then transferred to the acceptor end of tRNA(Tyr). In Campylobacter jejuni (strain RM1221), this protein is Tyrosine--tRNA ligase.